The chain runs to 202 residues: Stress enhanced protein 2, chloroplastic (202 aa).

The transit peptide at Met1–Tyr60 directs the protein to the chloroplast. A run of 2 helical transmembrane segments spans residues Leu111–Phe131 and Ala142–Ser162.

Belongs to the ELIP/psbS family.

The protein resides in the plastid. It is found in the chloroplast thylakoid membrane. May be involved in non-photochemical quenching, a process that maintains the balance between dissipation and utilization of light energy to minimize generation of oxidizing molecules, thereby protecting the plant against photo-oxidative damage. May play a photoprotective role in the thylakoid membrane in response to light stress. The polypeptide is Stress enhanced protein 2, chloroplastic (Arabidopsis thaliana (Mouse-ear cress)).